Reading from the N-terminus, the 468-residue chain is GTPase Der (468 aa).

2 consecutive EngA-type G domains span residues 3–167 and 179–352; these read PTLV…PYAE and PVIA…TAAM. Residues 9–16, 56–60, 119–122, 185–192, 232–236, and 297–300 contribute to the GTP site; these read GRPNVGKS, DTGGF, NKAE, DTAGL, and NKWD. Residues 353–437 form the KH-like domain; sequence AHIPTPKLTR…PLRVEFRTGH (85 aa). A disordered region spans residues 434–468; it reads RTGHNPYAGKKAPPLTEEEARRAHSRRRRNRKKYG. Positions 456–468 are enriched in basic residues; the sequence is AHSRRRRNRKKYG.

It belongs to the TRAFAC class TrmE-Era-EngA-EngB-Septin-like GTPase superfamily. EngA (Der) GTPase family. As to quaternary structure, associates with the 50S ribosomal subunit.

Its function is as follows. GTPase that plays an essential role in the late steps of ribosome biogenesis. The sequence is that of GTPase Der from Nitrosomonas eutropha (strain DSM 101675 / C91 / Nm57).